Here is a 632-residue protein sequence, read N- to C-terminus: Chaperone protein HtpG (632 aa).

An a; substrate-binding region spans residues Met1–Arg339. The tract at residues Glu340–Arg559 is b. The c stretch occupies residues Met560 to Ala632.

Belongs to the heat shock protein 90 family. Homodimer.

Its subcellular location is the cytoplasm. Molecular chaperone. Has ATPase activity. The polypeptide is Chaperone protein HtpG (Burkholderia pseudomallei (strain 1106a)).